We begin with the raw amino-acid sequence, 114 residues long: MIARIQFIKGIDEKVLPDVRLTRSRDGSTGTATFLFKNANLINKSLALNGEITGMYMIDEEGILETRDVSARFVNGKPQAVESIYIMKSPEAWDRFMRFMERYGESNGLAFTKA.

Belongs to the Psb28 family. As to quaternary structure, part of the photosystem II complex.

It is found in the plastid. The protein localises to the chloroplast thylakoid membrane. The chain is Photosystem II reaction center Psb28 protein from Thalassiosira pseudonana (Marine diatom).